We begin with the raw amino-acid sequence, 97 residues long: Small integral membrane protein 8 (97 aa).

Positions 1-24 (MSSAPEPPTFKKEPPKEKDFQSPG) are disordered. Residues 9-20 (TFKKEPPKEKDF) are compositionally biased toward basic and acidic residues. A helical membrane pass occupies residues 48 to 67 (PVMAFGLVTLSLCVAYIGYL).

The protein belongs to the SMIM8 family.

Its subcellular location is the membrane. This chain is Small integral membrane protein 8 (SMIM8), found in Pongo abelii (Sumatran orangutan).